The chain runs to 160 residues: Ureidoglycolate lyase (160 aa).

This sequence belongs to the ureidoglycolate lyase family. As to quaternary structure, homodimer. Requires Ni(2+) as cofactor.

It catalyses the reaction (S)-ureidoglycolate = urea + glyoxylate. Its pathway is nitrogen metabolism; (S)-allantoin degradation. Catalyzes the catabolism of the allantoin degradation intermediate (S)-ureidoglycolate, generating urea and glyoxylate. Involved in the anaerobic utilization of allantoin as sole nitrogen source. Reinforces the induction of genes involved in the degradation of allantoin and glyoxylate by producing glyoxylate. In Shigella flexneri serotype 5b (strain 8401), this protein is Ureidoglycolate lyase.